A 504-amino-acid polypeptide reads, in one-letter code: ATP synthase subunit alpha 1 (504 aa).

172-179 lines the ATP pocket; it reads GDRQTGKT.

This sequence belongs to the ATPase alpha/beta chains family. As to quaternary structure, F-type ATPases have 2 components, CF(1) - the catalytic core - and CF(0) - the membrane proton channel. CF(1) has five subunits: alpha(3), beta(3), gamma(1), delta(1), epsilon(1). CF(0) has three main subunits: a(1), b(2) and c(9-12). The alpha and beta chains form an alternating ring which encloses part of the gamma chain. CF(1) is attached to CF(0) by a central stalk formed by the gamma and epsilon chains, while a peripheral stalk is formed by the delta and b chains.

The protein resides in the cell inner membrane. It carries out the reaction ATP + H2O + 4 H(+)(in) = ADP + phosphate + 5 H(+)(out). Functionally, produces ATP from ADP in the presence of a proton gradient across the membrane. The alpha chain is a regulatory subunit. The polypeptide is ATP synthase subunit alpha 1 (Rhodopirellula baltica (strain DSM 10527 / NCIMB 13988 / SH1)).